The chain runs to 94 residues: ESAT-6-like protein EsxO (94 aa).

This sequence belongs to the WXG100 family. ESAT-6 subfamily. In terms of assembly, forms a complex with EsxP.

Its subcellular location is the secreted. In Mycobacterium tuberculosis (strain CDC 1551 / Oshkosh), this protein is ESAT-6-like protein EsxO.